A 512-amino-acid chain; its full sequence is Spastin homolog (512 aa).

Residues 1 to 274 lie on the Cytoplasmic side of the membrane; it reads MFAFSKGPAG…FKGLRQPVKG (274 aa). The stretch at 32-97 forms a coiled coil; that stretch reads IEMDELTKHA…MKLEKSAQDR (66 aa). The interval 110–182 is disordered; the sequence is KQSRSATVGP…SDTVHPEPPV (73 aa). The MTBD stretch occupies residues 115 to 233; that stretch reads ATVGPSRPAS…ERLLDEVLDN (119 aa). Positions 137-163 are enriched in basic and acidic residues; the sequence is APEKKNAAKAKENDENRHVCSRGDRCG. An intramembrane region (helical) is located at residues 275 to 294; sequence ILLFGPPGNGKTLLAKAVAG. 279-286 is a binding site for ATP; the sequence is GPPGNGKT. Residues 295-512 lie on the Cytoplasmic side of the membrane; the sequence is ESKQMFFNIS…LSDFSRSFGC (218 aa).

The protein belongs to the AAA ATPase family. Spastin subfamily. In terms of assembly, homohexamer. The homohexamer is stabilized by ATP-binding. The homohexamer may adopt a ring conformation through which microtubules pass prior to being severed. Interacts with microtubules. Interacts (via N-terminus) with tubulin; the interaction is direct.

The protein localises to the membrane. Its subcellular location is the cytoplasm. The protein resides in the cytoskeleton. It localises to the perinuclear region. The catalysed reaction is n ATP + n H2O + a microtubule = n ADP + n phosphate + (n+1) alpha/beta tubulin heterodimers.. ATP-dependent microtubule severing protein that specifically recognizes and cuts microtubules. Probably by regulating microtubule remodeling, plays a role in new synapse formation in GABAergic DD (Dorsal D type) neurons. This is Spastin homolog from Caenorhabditis elegans.